Reading from the N-terminus, the 245-residue chain is Probable phosphatase YcdX (245 aa).

Residues H7, H9, H15, H40, E73, H101, H131, D192, and H194 each coordinate Zn(2+).

This sequence belongs to the PHP family. Homotrimer. Requires Zn(2+) as cofactor.

In Escherichia coli O17:K52:H18 (strain UMN026 / ExPEC), this protein is Probable phosphatase YcdX.